Reading from the N-terminus, the 471-residue chain is MPSSGDAAGRRPHVVLIPSAGMGHLVPFGRLAVALSSGHGCDVSLVTVLPTVSTAESKHLDALFDAFPAVRRLDFELAPFDASEFPSADPFFLRFEAMRRSAPLLGPLLTGAGASALATDIALTSVVIPVAKEQGLPCHILFTASAAMLSLCAYFPTYLDANAGDGGGVGDVDIPGVYRIPKASIPQALHDPNHLFTRQFVANGRSLTSAAGILVNTFDALEPEAVAALQQGKVASGFPPVFAVGPLLPASNQAKDPQANYMEWLDAQPARSVVYVSFGSRKAISGEQLRELAAGLETSGHRFLWVVKSTVVDRDDAAELGELLGEGFLKRVEKRGLVTKAWVDQEEVLKHESVALFVSHCGWNSVTEAAASGVPVLALPRFGDQRVNSGVVARAGLGVWADTWSWEGEAGVIGAEEISEKVKAAMADEALRRKAASLAKAAAKAVAGGGSSHRCLVEFARLCQGGTCRTN.

The active-site Proton acceptor is the H24. H24 contacts an anthocyanidin. The active-site Charge relay is the D120. T143 serves as a coordination point for UDP-alpha-D-glucose. The interval 280-281 (SR) is UDP. UDP-alpha-D-glucose-binding residues include V343, Q345, H360, W363, N364, S365, and E368. G383 contacts an anthocyanidin. Residues D384 and Q385 each coordinate UDP-alpha-D-glucose.

Belongs to the UDP-glycosyltransferase family.

It catalyses the reaction a 3'-hydro-2'-hydroxy-beta-oxodihydrochalcone + UDP-alpha-D-glucose = a 3'-(beta-D-glucopyranosyl)-2'-hydroxy-beta-oxodihydrochalcone + UDP + H(+). UDP-glucose-dependent glucosyltransferase catalyzing the c-glucosylation of 2-hydroxyflavanones. In Oryza sativa subsp. japonica (Rice), this protein is UDP-glycosyltransferase CGT.